The following is a 128-amino-acid chain: Arginine decarboxylase proenzyme (128 aa).

Catalysis depends on Ser-76, which acts as the Schiff-base intermediate with substrate; via pyruvic acid. Pyruvic acid (Ser); by autocatalysis is present on Ser-76. His-81 (proton acceptor; for processing activity) is an active-site residue. Cys-96 serves as the catalytic Proton donor; for catalytic activity.

It belongs to the prokaryotic AdoMetDC family. Type 1 subfamily. As to quaternary structure, heterooctamer of four alpha and four beta chains arranged as a tetramer of alpha/beta heterodimers. The cofactor is pyruvate. In terms of processing, is synthesized initially as an inactive proenzyme. Formation of the active enzyme involves a self-maturation process in which the active site pyruvoyl group is generated from an internal serine residue via an autocatalytic post-translational modification. Two non-identical subunits are generated from the proenzyme in this reaction, and the pyruvate is formed at the N-terminus of the alpha chain, which is derived from the carboxyl end of the proenzyme. The post-translation cleavage follows an unusual pathway, termed non-hydrolytic serinolysis, in which the side chain hydroxyl group of the serine supplies its oxygen atom to form the C-terminus of the beta chain, while the remainder of the serine residue undergoes an oxidative deamination to produce ammonia and the pyruvoyl group blocking the N-terminus of the alpha chain.

The enzyme catalyses L-arginine + H(+) = agmatine + CO2. The protein operates within amine and polyamine biosynthesis; agmatine biosynthesis; agmatine from L-arginine: step 1/1. Functionally, specifically catalyzes the decarboxylation of L-arginine to agmatine. Has no S-adenosylmethionine decarboxylase (AdoMetDC) activity. The polypeptide is Arginine decarboxylase proenzyme (Metallosphaera sedula (strain ATCC 51363 / DSM 5348 / JCM 9185 / NBRC 15509 / TH2)).